Here is a 227-residue protein sequence, read N- to C-terminus: 7-cyano-7-deazaguanine synthase (227 aa).

8–18 (FSGGQDSTTCL) lines the ATP pocket. Zn(2+)-binding residues include Cys-187, Cys-196, Cys-199, and Cys-202.

Belongs to the QueC family. Requires Zn(2+) as cofactor.

The enzyme catalyses 7-carboxy-7-deazaguanine + NH4(+) + ATP = 7-cyano-7-deazaguanine + ADP + phosphate + H2O + H(+). The protein operates within purine metabolism; 7-cyano-7-deazaguanine biosynthesis. In terms of biological role, catalyzes the ATP-dependent conversion of 7-carboxy-7-deazaguanine (CDG) to 7-cyano-7-deazaguanine (preQ(0)). This chain is 7-cyano-7-deazaguanine synthase, found in Shewanella pealeana (strain ATCC 700345 / ANG-SQ1).